The primary structure comprises 147 residues: MKVIFLKDVPGQGKKNEIKEVSDGYARNYLLPNQLVKIATNNSVKTLKEHLKADQEEKELAKAQTKQIKKTLEELTLHFKLQTNDDKVFGSISSQDIVNQLKDLHRIELDKKKFIRFKNINKIGINYIKVKLDFGIEAIIKVDVKEV.

The protein belongs to the bacterial ribosomal protein bL9 family.

In terms of biological role, binds to the 23S rRNA. This Mycoplasma capricolum subsp. capricolum (strain California kid / ATCC 27343 / NCTC 10154) protein is Large ribosomal subunit protein bL9.